The primary structure comprises 352 residues: Molybdenum import ATP-binding protein ModC (352 aa).

The ABC transporter domain maps to M1–E229. ATP is bound at residue G31 to T38. A Mop domain is found at Q289 to A352.

This sequence belongs to the ABC transporter superfamily. Molybdate importer (TC 3.A.1.8) family. As to quaternary structure, the complex is composed of two ATP-binding proteins (ModC), two transmembrane proteins (ModB) and a solute-binding protein (ModA).

Its subcellular location is the cell inner membrane. It catalyses the reaction molybdate(out) + ATP + H2O = molybdate(in) + ADP + phosphate + H(+). Functionally, part of the ABC transporter complex ModABC involved in molybdenum import. Responsible for energy coupling to the transport system. The sequence is that of Molybdenum import ATP-binding protein ModC from Salmonella paratyphi A (strain ATCC 9150 / SARB42).